We begin with the raw amino-acid sequence, 534 residues long: NEDD8-activating enzyme E1 regulatory subunit (534 aa).

At A2 the chain carries N-acetylalanine. N6-acetyllysine occurs at positions 6 and 341. The interaction with UBA3 stretch occupies residues 331–344; the sequence is DMIADSNKYIKLQN.

This sequence belongs to the ubiquitin-activating E1 family. ULA1 subfamily. Heterodimer of UBA3 and NAE1. The complex binds NEDD8 and UBE2M. Binds APP and TP53BP2. Post-translationally, ubiquitinated by TRIP12, leading to its degradation by the proteasome. Expressed throughout the brain. In hippocampus, strongly expressed in granule cells and in the pyramidal cell layer. Strongly expressed in the piriform cortex. In the cerebellum, expressed only in Purkinje cells.

Its subcellular location is the cell membrane. It participates in protein modification; protein neddylation. Its activity is regulated as follows. Binding of TP53BP2 to the regulatory subunit NAE1 decreases neddylation activity. Regulatory subunit of the dimeric UBA3-NAE1 E1 enzyme. E1 activates NEDD8 by first adenylating its C-terminal glycine residue with ATP, thereafter linking this residue to the side chain of the catalytic cysteine, yielding a NEDD8-UBA3 thioester and free AMP. E1 finally transfers NEDD8 to the catalytic cysteine of UBE2M. Necessary for cell cycle progression through the S-M checkpoint. Overexpression of NAE1 causes apoptosis through deregulation of NEDD8 conjugation. The covalent attachment of NEDD8 to target proteins is known as 'neddylation' and the process is involved in the regulation of cell growth, viability and development. This chain is NEDD8-activating enzyme E1 regulatory subunit (Nae1), found in Rattus norvegicus (Rat).